A 509-amino-acid chain; its full sequence is ATP synthase subunit alpha (509 aa).

Residue 169–176 (GDRQTGKT) participates in ATP binding.

It belongs to the ATPase alpha/beta chains family. In terms of assembly, F-type ATPases have 2 components, CF(1) - the catalytic core - and CF(0) - the membrane proton channel. CF(1) has five subunits: alpha(3), beta(3), gamma(1), delta(1), epsilon(1). CF(0) has three main subunits: a(1), b(2) and c(9-12). The alpha and beta chains form an alternating ring which encloses part of the gamma chain. CF(1) is attached to CF(0) by a central stalk formed by the gamma and epsilon chains, while a peripheral stalk is formed by the delta and b chains.

It is found in the cell inner membrane. It catalyses the reaction ATP + H2O + 4 H(+)(in) = ADP + phosphate + 5 H(+)(out). Functionally, produces ATP from ADP in the presence of a proton gradient across the membrane. The alpha chain is a regulatory subunit. In Rhizobium etli (strain CIAT 652), this protein is ATP synthase subunit alpha.